Here is a 413-residue protein sequence, read N- to C-terminus: Chloramphenicol efflux pump Rv0191 (413 aa).

12 consecutive transmembrane segments (helical) span residues 23-43 (LSVL…PVGA), 55-75 (VVLV…TTVP), 89-109 (LVVS…APNF), 110-130 (AVLA…WAVI), 150-170 (IYIG…AMSL), 176-196 (LAAV…RLAL), 226-246 (VLTM…VVII), 256-276 (NLAW…PLVA), 286-306 (AVIV…ALAF), 312-332 (AATA…ATAV), 353-373 (GLYV…GGLL), and 378-398 (LAMM…GMTV).

It belongs to the major facilitator superfamily.

It is found in the cell membrane. Its activity is regulated as follows. Inhibited by the drug efflux pump inhibitors verapamil, resperine, piperine, chlorpromazine and carbonyl cyanide m-chlorophenylhydrazone (CCCP). Its function is as follows. Active efflux pump that plays an important role in chloramphenicol resistance. Overexpression causes pyrazinamide resistance. The polypeptide is Chloramphenicol efflux pump Rv0191 (Mycobacterium tuberculosis (strain ATCC 25618 / H37Rv)).